A 106-amino-acid chain; its full sequence is Ferredoxin-2 (106 aa).

2 4Fe-4S ferredoxin-type domains span residues 2-29 and 30-59; these read YVVT…YEGE and NFLV…GKWL. Residues cysteine 8 and cysteine 16 each coordinate [3Fe-4S] cluster. [4Fe-4S] cluster contacts are provided by cysteine 20, cysteine 39, cysteine 42, and cysteine 45. Cysteine 49 provides a ligand contact to [3Fe-4S] cluster. The segment at 80–106 is disordered; sequence ADADDWKDKPDKTGLLSENPGKGTVCH.

Requires [4Fe-4S] cluster as cofactor. It depends on [3Fe-4S] cluster as a cofactor.

Its function is as follows. Ferredoxins are iron-sulfur proteins that transfer electrons in a wide variety of metabolic reactions. The sequence is that of Ferredoxin-2 from Rhodospirillum rubrum.